Reading from the N-terminus, the 397-residue chain is Argininosuccinate synthase (397 aa).

8–16 (AYSGGLDTS) contacts ATP. The L-citrulline site is built by Y86 and S91. G116 is an ATP binding site. 3 residues coordinate L-aspartate: T118, N122, and D123. N122 contributes to the L-citrulline binding site. 5 residues coordinate L-citrulline: R126, S175, S184, E260, and Y272.

It belongs to the argininosuccinate synthase family. Type 1 subfamily. As to quaternary structure, homotetramer.

The protein resides in the cytoplasm. The enzyme catalyses L-citrulline + L-aspartate + ATP = 2-(N(omega)-L-arginino)succinate + AMP + diphosphate + H(+). Its pathway is amino-acid biosynthesis; L-arginine biosynthesis; L-arginine from L-ornithine and carbamoyl phosphate: step 2/3. In Clostridium botulinum (strain ATCC 19397 / Type A), this protein is Argininosuccinate synthase.